The primary structure comprises 376 residues: Deoxyguanosinetriphosphate triphosphohydrolase-like protein (376 aa).

The interval 1 to 32 (MEPSFAPYAAHSSQTRGRVHREAPAAPRSEFQ) is disordered. Residues 65–196 (RLTHSIEVAQ…ANLADEIAYN (132 aa)) form the HD domain.

This sequence belongs to the dGTPase family. Type 2 subfamily.

This chain is Deoxyguanosinetriphosphate triphosphohydrolase-like protein, found in Thiobacillus denitrificans (strain ATCC 25259 / T1).